Here is a 755-residue protein sequence, read N- to C-terminus: Histone-lysine N-methyltransferase, H3 lysine-9 specific SUVH8 (755 aa).

Disordered regions lie at residues 62–98 (YDRD…PPQT) and 111–243 (YDRD…KMVI). 2 stretches are compositionally biased toward basic and acidic residues: residues 73-86 (VHRE…EEAH) and 122-135 (IDRE…EDAH). Residues 174-186 (KRGRGRPKGSKNG) constitute a DNA-binding region (a.T hook). The segment covering 174–193 (KRGRGRPKGSKNGSRKPKKP) has biased composition (basic residues). Positions 197-207 (DNNSTDASAGP) are enriched in polar residues. The segment covering 212–231 (GKRRCGRPKGLKNRSRKPKK) has biased composition (basic residues). One can recognise a YDG domain in the interval 310–448 (GPIPGVQVGD…FKEYRFKLLR (139 aa)). The 51-residue stretch at 528 to 578 (QSLVQSYIHQNCTCILKNCGQLPYHDNILVCRKPLIYECGGSCPTRMVETG) folds into the Pre-SET domain. An SET domain is found at 581-723 (LHLEVFKTSN…PMTELTYDYG (143 aa)). S-adenosyl-L-methionine contacts are provided by residues 591–593 (CGW), aspartate 624, tyrosine 626, arginine 676, and 679–680 (NH). Zn(2+)-binding residues include cysteine 682, cysteine 743, cysteine 745, and cysteine 750. Residues 739 to 755 (GKKICLCGSVKCRGSFG) enclose the Post-SET domain.

This sequence belongs to the class V-like SAM-binding methyltransferase superfamily. Histone-lysine methyltransferase family. Suvar3-9 subfamily.

Its subcellular location is the nucleus. It is found in the chromosome. The protein resides in the centromere. It carries out the reaction N(6)-methyl-L-lysyl(9)-[histone H3] + S-adenosyl-L-methionine = N(6),N(6)-dimethyl-L-lysyl(9)-[histone H3] + S-adenosyl-L-homocysteine + H(+). The enzyme catalyses L-lysyl(9)-[histone H3] + S-adenosyl-L-methionine = N(6)-methyl-L-lysyl(9)-[histone H3] + S-adenosyl-L-homocysteine + H(+). In terms of biological role, histone methyltransferase. Methylates 'Lys-9' of histone H3. H3 'Lys-9' methylation represents a specific tag for epigenetic transcriptional repression. The sequence is that of Histone-lysine N-methyltransferase, H3 lysine-9 specific SUVH8 (SUVH8) from Arabidopsis thaliana (Mouse-ear cress).